Reading from the N-terminus, the 299-residue chain is Nicotinate-nucleotide pyrophosphorylase [carboxylating] (299 aa).

Positions 8-12 (HLLPP) are important for hexamer formation. Quinolinate is bound by residues R102, 138-139 (RK), 160-161 (HR), K171, E201, D222, 248-250 (SGG), and G270. T291 carries the post-translational modification Phosphothreonine.

It belongs to the NadC/ModD family. In terms of assembly, hexamer formed by 3 homodimers.

The catalysed reaction is nicotinate beta-D-ribonucleotide + CO2 + diphosphate = quinolinate + 5-phospho-alpha-D-ribose 1-diphosphate + 2 H(+). It participates in cofactor biosynthesis; NAD(+) biosynthesis; nicotinate D-ribonucleotide from quinolinate: step 1/1. In terms of biological role, involved in the catabolism of quinolinic acid (QA). The polypeptide is Nicotinate-nucleotide pyrophosphorylase [carboxylating] (QPRT) (Bos taurus (Bovine)).